The primary structure comprises 38 residues: Potassium channel toxin alpha-KTx 3.8 (38 aa).

Cystine bridges form between Cys-8–Cys-28, Cys-14–Cys-33, and Cys-18–Cys-35. Positions Gly-26–Cys-33 are interaction with Ca(2+)-activated K(+) channels.

As to expression, expressed by the venom gland.

It localises to the secreted. Potassium channel inhibitor. This chain is Potassium channel toxin alpha-KTx 3.8, found in Hottentotta tamulus sindicus (Scorpion).